A 1142-amino-acid polypeptide reads, in one-letter code: Fibronectin type-III domain-containing protein 3A (1142 aa).

Residues 104–191 (YGDVDAHSTH…KSGKGKGGTQ (88 aa)) form a disordered region. The span at 107-145 (VDAHSTHGRSNFRDERSSKTYERLQKKLKDRQGTQKDKM) shows a compositional bias: basic and acidic residues. Low complexity predominate over residues 146-158 (SSPPSSPQKCPSP). Phosphoserine is present on residues Ser-147, Ser-151, and Ser-157. 9 Fibronectin type-III domains span residues 212–313 (NIVK…TLSC), 317–409 (IPNP…TSGC), 413–506 (MPAS…TCPD), 510–604 (IPVK…TPAV), 608–701 (PCLP…TAPG), 705–795 (QCKP…TPPS), 805–894 (EISD…TKPL), 895–989 (PPDP…TPKS), and 990–1095 (VPAA…TEPP). At Lys-328 the chain carries N6-acetyllysine. The helical transmembrane segment at 1121–1141 (NLVLFAFFSILIAFIIQYFVI) threads the bilayer.

Belongs to the FNDC3 family.

It localises to the golgi apparatus membrane. Its function is as follows. Mediates spermatid-Sertoli adhesion during spermatogenesis. The chain is Fibronectin type-III domain-containing protein 3A (FNDC3A) from Pongo abelii (Sumatran orangutan).